The following is a 242-amino-acid chain: 3-deoxy-manno-octulosonate cytidylyltransferase (242 aa).

This sequence belongs to the KdsB family.

The protein localises to the cytoplasm. The enzyme catalyses 3-deoxy-alpha-D-manno-oct-2-ulosonate + CTP = CMP-3-deoxy-beta-D-manno-octulosonate + diphosphate. The protein operates within nucleotide-sugar biosynthesis; CMP-3-deoxy-D-manno-octulosonate biosynthesis; CMP-3-deoxy-D-manno-octulosonate from 3-deoxy-D-manno-octulosonate and CTP: step 1/1. It functions in the pathway bacterial outer membrane biogenesis; lipopolysaccharide biosynthesis. Its function is as follows. Activates KDO (a required 8-carbon sugar) for incorporation into bacterial lipopolysaccharide in Gram-negative bacteria. This chain is 3-deoxy-manno-octulosonate cytidylyltransferase, found in Anaeromyxobacter dehalogenans (strain 2CP-C).